Consider the following 69-residue polypeptide: Brevinin-1Pb (69 aa).

A signal peptide spans 1–20; that stretch reads MFTLNKFLLLLFFLGTINLS. A propeptide spanning residues 21–43 is cleaved from the precursor; sequence FCEEENAEEERIDEPDETDVEVE. The cysteines at positions 63 and 69 are disulfide-linked.

Expressed by the skin glands.

It is found in the secreted. Antibacterial activity against Gram-positive bacterium S.aureus and Gram-negative bacterium E.coli. Has activity against C.albicans. This chain is Brevinin-1Pb, found in Lithobates pipiens (Northern leopard frog).